The following is a 472-amino-acid chain: ATP-dependent rRNA helicase rrp3 (472 aa).

The segment at 1–51 (MPDVKKRKIAHEAPEHGSDAESTSSHESVAQQDDTAETQDEAAATETRPAP) is disordered. A compositionally biased stretch (basic and acidic residues) spans 10-19 (AHEAPEHGSD). Polar residues predominate over residues 20-29 (AESTSSHESV). The Q motif signature appears at 52-80 (KSFKDLGIIDQLCEACETMGYKAPTPIQA). One can recognise a Helicase ATP-binding domain in the interval 83-254 (IPLALQGRDL…RASLSNPLRV (172 aa)). An ATP-binding site is contributed by 96-103 (AETGSGKT). The DEAD box signature appears at 202–205 (DEAD). The 145-residue stretch at 282 to 426 (YLVYLLNEFV…EYELEKDEVM (145 aa)) folds into the Helicase C-terminal domain. A disordered region spans residues 451–472 (GTKAKKFGKGKRSRDEMDQEEG). A compositionally biased stretch (basic residues) spans 452 to 462 (TKAKKFGKGKR).

The protein belongs to the DEAD box helicase family. DDX47/RRP3 subfamily. As to quaternary structure, interacts with the SSU processome.

Its subcellular location is the nucleus. It catalyses the reaction ATP + H2O = ADP + phosphate + H(+). Its function is as follows. ATP-dependent rRNA helicase required for pre-ribosomal RNA processing. Involved in the maturation of the 35S-pre-rRNA and to its cleavage to mature 18S rRNA. In Neosartorya fischeri (strain ATCC 1020 / DSM 3700 / CBS 544.65 / FGSC A1164 / JCM 1740 / NRRL 181 / WB 181) (Aspergillus fischerianus), this protein is ATP-dependent rRNA helicase rrp3.